A 263-amino-acid chain; its full sequence is Ribosomal RNA small subunit methyltransferase A (263 aa).

6 residues coordinate S-adenosyl-L-methionine: His-13, Leu-15, Gly-40, Glu-61, Asp-86, and Asn-105.

It belongs to the class I-like SAM-binding methyltransferase superfamily. rRNA adenine N(6)-methyltransferase family. RsmA subfamily.

The protein resides in the cytoplasm. The enzyme catalyses adenosine(1518)/adenosine(1519) in 16S rRNA + 4 S-adenosyl-L-methionine = N(6)-dimethyladenosine(1518)/N(6)-dimethyladenosine(1519) in 16S rRNA + 4 S-adenosyl-L-homocysteine + 4 H(+). Specifically dimethylates two adjacent adenosines (A1518 and A1519) in the loop of a conserved hairpin near the 3'-end of 16S rRNA in the 30S particle. May play a critical role in biogenesis of 30S subunits. The chain is Ribosomal RNA small subunit methyltransferase A from Dichelobacter nodosus (strain VCS1703A).